The sequence spans 210 residues: Urease accessory protein UreF (210 aa).

Belongs to the UreF family. In terms of assembly, ureD, UreF and UreG form a complex that acts as a GTP-hydrolysis-dependent molecular chaperone, activating the urease apoprotein by helping to assemble the nickel containing metallocenter of UreC. The UreE protein probably delivers the nickel.

The protein localises to the cytoplasm. Required for maturation of urease via the functional incorporation of the urease nickel metallocenter. This is Urease accessory protein UreF from Cereibacter sphaeroides (strain ATCC 17023 / DSM 158 / JCM 6121 / CCUG 31486 / LMG 2827 / NBRC 12203 / NCIMB 8253 / ATH 2.4.1.) (Rhodobacter sphaeroides).